The primary structure comprises 614 residues: Spastin (614 aa).

The segment at 1–45 (MNSPGGRGKKKGSGGPSSPVPPRPPPPCQARSRPAPKPAPPPQSP) is disordered. Positions 1-50 (MNSPGGRGKKKGSGGPSSPVPPRPPPPCQARSRPAPKPAPPPQSPHKRNL) are required for nuclear localization. The Cytoplasmic portion of the chain corresponds to 1 to 56 (MNSPGGRGKKKGSGGPSSPVPPRPPPPCQARSRPAPKPAPPPQSPHKRNLYYFSYP). The segment at 1 to 80 (MNSPGGRGKK…LGLLFVWLCQ (80 aa)) is required for interaction with ATL1. The segment at 1 to 192 (MNSPGGRGKK…LVMAKDRLQL (192 aa)) is required for midbody localization. Residues 1–298 (MNSPGGRGKK…STPKTNRTNK (298 aa)) are required for interaction with RTN1. Positions 4–11 (PGGRGKKK) match the Nuclear localization signal motif. 2 stretches are compositionally biased toward pro residues: residues 18–28 (SPVPPRPPPPC) and 35–44 (APKPAPPPQS). The tract at residues 50–87 (LYYFSYPLFLGFALLRLVAFHLGLLFVWLCQRFSRALM) is required for interaction with SSNA1 and microtubules. Residues 57-77 (LFLGFALLRLVAFHLGLLFVW) constitute an intramembrane region (helical). A Nuclear export signal motif is present at residues 59–67 (LGFALLRLV). Residues 78–614 (LCQRFSRALM…WNKDFGDTTV (537 aa)) lie on the Cytoplasmic side of the membrane. The segment at 110-194 (EAERVRAFHK…MAKDRLQLLE (85 aa)) is sufficient for interaction with CHMP1B. Residues 112–198 (ERVRAFHKQA…RLQLLEKLQP (87 aa)) form a required for interaction with microtubules region. The MIT domain occupies 118–193 (HKQAFEYISV…VMAKDRLQLL (76 aa)). A disordered region spans residues 220–310 (NGHLQSESGA…TPTTAARKKK (91 aa)). The tract at residues 226-614 (ESGAVPKRKD…WNKDFGDTTV (389 aa)) is sufficient for microtubule severing. A phosphoserine mark is found at Ser243 and Ser266. A required for interaction with microtubules and microtubule severing region spans residues 268 to 326 (SGLSMVSGVRQGPGSAAATHKSTPKTNRTNKPSTPTTAARKKKDLKNFRNVDSNLANLI). Residues 287–304 (HKSTPKTNRTNKPSTPTT) show a composition bias toward polar residues. Thr304 is modified (phosphothreonine). Positions 307–310 (RKKK) match the Nuclear localization signal motif. ATP is bound at residue 380 to 387 (GPPGNGKT). The residue at position 595 (Ser595) is a Phosphoserine.

Belongs to the AAA ATPase family. Spastin subfamily. As to quaternary structure, homohexamer. Mostly monomeric, but assembles into hexameric structure for short periods of time. Oligomerization seems to be a prerequisite for catalytic activity. Binding to ATP in a cleft between two adjacent subunits stabilizes the homohexameric form. Binds to microtubules at least in part via the alpha-tubulin and beta-tubulin tails. The hexamer adopts a ring conformation through which microtubules pass prior to being severed. Does not interact strongly with tubulin heterodimers. Interacts (via MIT domain) with CHMP1B; the interaction is direct. Interacts with SSNA1. Interacts with ATL1. Interacts with RTN1. Interacts with ZFYVE27. Interacts with REEP1. Interacts (via MIT domain) with IST1.

It is found in the membrane. The protein localises to the endoplasmic reticulum. It localises to the midbody. The protein resides in the cytoplasm. Its subcellular location is the cytoskeleton. It is found in the microtubule organizing center. The protein localises to the centrosome. It localises to the perinuclear region. The protein resides in the nucleus. Its subcellular location is the spindle. It is found in the cell projection. The protein localises to the axon. It catalyses the reaction n ATP + n H2O + a microtubule = n ADP + n phosphate + (n+1) alpha/beta tubulin heterodimers.. Allosteric enzyme with a cooperative mechanism; at least two neighbor subunits influence each other strongly in spastin hexamers. Microtubule binding promotes cooperative interactions among spastin subunits. Its function is as follows. ATP-dependent microtubule severing protein that specifically recognizes and cuts microtubules that are polyglutamylated. Preferentially recognizes and acts on microtubules decorated with short polyglutamate tails: severing activity increases as the number of glutamates per tubulin rises from one to eight, but decreases beyond this glutamylation threshold. Severing activity is not dependent on tubulin acetylation or detyrosination. Microtubule severing promotes reorganization of cellular microtubule arrays and the release of microtubules from the centrosome following nucleation. It is critical for the biogenesis and maintenance of complex microtubule arrays in axons, spindles and cilia. SPAST is involved in abscission step of cytokinesis and nuclear envelope reassembly during anaphase in cooperation with the ESCRT-III complex. Recruited at the midbody, probably by IST1, and participates in membrane fission during abscission together with the ESCRT-III complex. Recruited to the nuclear membrane by IST1 and mediates microtubule severing, promoting nuclear envelope sealing and mitotic spindle disassembly during late anaphase. Required for membrane traffic from the endoplasmic reticulum (ER) to the Golgi and endosome recycling. Recruited by IST1 to endosomes and regulates early endosomal tubulation and recycling by mediating microtubule severing. Probably plays a role in axon growth and the formation of axonal branches. The polypeptide is Spastin (Bos taurus (Bovine)).